Consider the following 337-residue polypeptide: Transcription initiation factor IIB (337 aa).

The TFIIB-type zinc finger occupies serine 36–aspartate 68. The Zn(2+) site is built by cysteine 41, cysteine 44, cysteine 60, and cysteine 63. 2 repeat units span residues serine 154–leucine 237 and aspartate 248–glutamate 329.

The protein belongs to the TFIIB family.

In terms of biological role, stabilizes TBP binding to an archaeal box-A promoter. Also responsible for recruiting RNA polymerase II to the pre-initiation complex (DNA-TBP-TFIIB). The polypeptide is Transcription initiation factor IIB (Methanoculleus marisnigri (strain ATCC 35101 / DSM 1498 / JR1)).